The chain runs to 289 residues: Spore coat polysaccharide biosynthesis protein SpsD (289 aa).

The region spanning 137–289 is the N-acetyltransferase domain; it reads FELGPPEPGD…YHIWPGKEAK (153 aa).

It functions in the pathway spore coat biogenesis; spore coat polysaccharide biosynthesis. The chain is Spore coat polysaccharide biosynthesis protein SpsD (spsD) from Bacillus subtilis (strain 168).